The chain runs to 85 residues: Small ribosomal subunit protein bS20 (85 aa).

The segment at 1–24 (MANIKSAIKRAKLSEERRSHNASI) is disordered.

This sequence belongs to the bacterial ribosomal protein bS20 family.

Binds directly to 16S ribosomal RNA. This chain is Small ribosomal subunit protein bS20, found in Bacillus mycoides (strain KBAB4) (Bacillus weihenstephanensis).